The sequence spans 274 residues: Putative pyruvate, phosphate dikinase regulatory protein (274 aa).

An ADP-binding site is contributed by 150–157 (GPSRTSKT).

This sequence belongs to the pyruvate, phosphate/water dikinase regulatory protein family. PDRP subfamily.

The catalysed reaction is N(tele)-phospho-L-histidyl/L-threonyl-[pyruvate, phosphate dikinase] + ADP = N(tele)-phospho-L-histidyl/O-phospho-L-threonyl-[pyruvate, phosphate dikinase] + AMP + H(+). It carries out the reaction N(tele)-phospho-L-histidyl/O-phospho-L-threonyl-[pyruvate, phosphate dikinase] + phosphate + H(+) = N(tele)-phospho-L-histidyl/L-threonyl-[pyruvate, phosphate dikinase] + diphosphate. In terms of biological role, bifunctional serine/threonine kinase and phosphorylase involved in the regulation of the pyruvate, phosphate dikinase (PPDK) by catalyzing its phosphorylation/dephosphorylation. The protein is Putative pyruvate, phosphate dikinase regulatory protein of Rickettsia peacockii (strain Rustic).